The primary structure comprises 158 residues: 2-C-methyl-D-erythritol 2,4-cyclodiphosphate synthase (158 aa).

2 residues coordinate a divalent metal cation: D9 and H11. 4-CDP-2-C-methyl-D-erythritol 2-phosphate-binding positions include 9–11 (DVH) and 35–36 (HS). H43 is a binding site for a divalent metal cation. 4-CDP-2-C-methyl-D-erythritol 2-phosphate-binding positions include 57–59 (DIG), 62–66 (FPDTD), 133–136 (TTSE), F140, and R143.

This sequence belongs to the IspF family. In terms of assembly, homotrimer. A divalent metal cation is required as a cofactor.

It catalyses the reaction 4-CDP-2-C-methyl-D-erythritol 2-phosphate = 2-C-methyl-D-erythritol 2,4-cyclic diphosphate + CMP. Its pathway is isoprenoid biosynthesis; isopentenyl diphosphate biosynthesis via DXP pathway; isopentenyl diphosphate from 1-deoxy-D-xylulose 5-phosphate: step 4/6. Its function is as follows. Involved in the biosynthesis of isopentenyl diphosphate (IPP) and dimethylallyl diphosphate (DMAPP), two major building blocks of isoprenoid compounds. Catalyzes the conversion of 4-diphosphocytidyl-2-C-methyl-D-erythritol 2-phosphate (CDP-ME2P) to 2-C-methyl-D-erythritol 2,4-cyclodiphosphate (ME-CPP) with a corresponding release of cytidine 5-monophosphate (CMP). This chain is 2-C-methyl-D-erythritol 2,4-cyclodiphosphate synthase, found in Pasteurella multocida (strain Pm70).